The primary structure comprises 321 residues: Putative ankyrin repeat domain-containing protein 26-like protein (321 aa).

ANK repeat units follow at residues 48-78, 82-111, 115-144, 148-177, and 181-210; these read KHLG…DLDE, KKRT…QLDV, KNRT…DPDL, YGNT…NIES, and DELT…NLTA. Disordered regions lie at residues 222–242 and 268–321; these read EYKE…GTSN and FNKP…NENI. A compositionally biased stretch (polar residues) spans 229–242; the sequence is PRNPQNSNPEGTSN.

The sequence is that of Putative ankyrin repeat domain-containing protein 26-like protein (ANKRD26P1) from Homo sapiens (Human).